Consider the following 846-residue polypeptide: Leucine--tRNA ligase (846 aa).

The 'HIGH' region signature appears at 47–57; it reads PYPSGRIHMGH. Residues 621–625 carry the 'KMSKS' region motif; sequence KMSKS. Lys-624 provides a ligand contact to ATP.

This sequence belongs to the class-I aminoacyl-tRNA synthetase family.

The protein resides in the cytoplasm. The enzyme catalyses tRNA(Leu) + L-leucine + ATP = L-leucyl-tRNA(Leu) + AMP + diphosphate. The chain is Leucine--tRNA ligase from Zymomonas mobilis subsp. mobilis (strain ATCC 31821 / ZM4 / CP4).